The following is a 229-amino-acid chain: PKHD-type hydroxylase Nham_1514 (229 aa).

The Fe2OG dioxygenase domain occupies 78 to 180 (QIFPPLFNRY…RVASFFWLQS (103 aa)). 3 residues coordinate Fe cation: His-98, Asp-100, and His-161. Arg-171 serves as a coordination point for 2-oxoglutarate.

Fe(2+) serves as cofactor. L-ascorbate is required as a cofactor.

This Nitrobacter hamburgensis (strain DSM 10229 / NCIMB 13809 / X14) protein is PKHD-type hydroxylase Nham_1514.